The chain runs to 317 residues: Adenine deaminase (317 aa).

Zn(2+)-binding residues include His14, His16, and His194. Glu197 acts as the Proton donor in catalysis. Residue Asp275 participates in Zn(2+) binding. A substrate-binding site is contributed by Asp276.

This sequence belongs to the metallo-dependent hydrolases superfamily. Adenosine and AMP deaminases family. Adenine deaminase type 2 subfamily. It depends on Zn(2+) as a cofactor.

The enzyme catalyses adenine + H2O + H(+) = hypoxanthine + NH4(+). Functionally, catalyzes the hydrolytic deamination of adenine to hypoxanthine. Plays an important role in the purine salvage pathway and in nitrogen catabolism. This chain is Adenine deaminase, found in Pseudomonas syringae pv. syringae (strain B728a).